Here is a 166-residue protein sequence, read N- to C-terminus: Large ribosomal subunit protein uL10 (166 aa).

The protein belongs to the universal ribosomal protein uL10 family. Part of the ribosomal stalk of the 50S ribosomal subunit. The N-terminus interacts with L11 and the large rRNA to form the base of the stalk. The C-terminus forms an elongated spine to which L12 dimers bind in a sequential fashion forming a multimeric L10(L12)X complex.

Its function is as follows. Forms part of the ribosomal stalk, playing a central role in the interaction of the ribosome with GTP-bound translation factors. This Pseudomonas syringae pv. tomato (strain ATCC BAA-871 / DC3000) protein is Large ribosomal subunit protein uL10.